A 658-amino-acid polypeptide reads, in one-letter code: Exoribonuclease 2 (658 aa).

Positions 189 to 530 (REDLTSLYFT…VNHRLIKQVL (342 aa)) constitute an RNB domain. Residues 576 to 658 (AVEFDCEIAD…ETRSIVGNII (83 aa)) form the S1 motif domain.

Belongs to the RNR ribonuclease family. RNase II subfamily.

The protein resides in the cytoplasm. It catalyses the reaction Exonucleolytic cleavage in the 3'- to 5'-direction to yield nucleoside 5'-phosphates.. Functionally, involved in mRNA degradation. Hydrolyzes single-stranded polyribonucleotides processively in the 3' to 5' direction. The sequence is that of Exoribonuclease 2 from Actinobacillus pleuropneumoniae serotype 3 (strain JL03).